A 313-amino-acid chain; its full sequence is Pyrimidine-specific ribonucleoside hydrolase RihB (313 aa).

Asp11 acts as the Proton acceptor in catalysis. Residues Asp11, Asp16, and Val124 each contribute to the Ca(2+) site. Residues Gln227 and His239 each coordinate substrate. Asp240 provides a ligand contact to Ca(2+).

Belongs to the IUNH family. RihB subfamily. In terms of assembly, homotetramer. Ca(2+) is required as a cofactor.

It carries out the reaction a pyrimidine ribonucleoside + H2O = a pyrimidine nucleobase + D-ribose. Functionally, hydrolyzes cytidine or uridine to ribose and cytosine or uracil, respectively. Has a clear preference for cytidine over uridine. Strictly specific for ribonucleosides. This Escherichia coli (strain SE11) protein is Pyrimidine-specific ribonucleoside hydrolase RihB.